The following is a 574-amino-acid chain: Adenine deaminase (574 aa).

The protein belongs to the metallo-dependent hydrolases superfamily. Adenine deaminase family. Mn(2+) serves as cofactor.

It carries out the reaction adenine + H2O + H(+) = hypoxanthine + NH4(+). This chain is Adenine deaminase, found in Thermosipho africanus (strain TCF52B).